The chain runs to 553 residues: Flagellar hook-associated protein 1 (553 aa).

It belongs to the flagella basal body rod proteins family.

It is found in the secreted. It localises to the bacterial flagellum. The sequence is that of Flagellar hook-associated protein 1 (flgK) from Salmonella typhi.